The chain runs to 154 residues: 8-oxo-dGTP diphosphatase (154 aa).

In terms of domain architecture, Nudix hydrolase spans 1–129 (MPQLATICYI…DHTFVEWLLE (129 aa)). Gly38, Glu53, Glu56, and Glu57 together coordinate Mg(2+). The Nudix box signature appears at 38–59 (GKLERGETPQECAAREILEETG).

Belongs to the Nudix hydrolase family. As to quaternary structure, homotrimer. It depends on Mg(2+) as a cofactor.

It catalyses the reaction 8-oxo-dGTP + H2O = 8-oxo-dGMP + diphosphate + H(+). Functionally, involved in the DNA repair system to avoid A.T to G.C transversions. Degrades 8-oxo-dGTP to the monophosphate, but is also active on all of the nucleoside triphosphates. The protein is 8-oxo-dGTP diphosphatase (mutX) of Streptococcus pneumoniae serotype 4 (strain ATCC BAA-334 / TIGR4).